Reading from the N-terminus, the 421-residue chain is Probable sugar-binding periplasmic protein (421 aa).

The signal sequence occupies residues 1–27 (MHKLLKLAAMGTAACALLAGMAPVANA).

The protein belongs to the bacterial solute-binding protein 1 family.

Its subcellular location is the periplasm. Functionally, part of a binding-protein-dependent transport system for a sugar. The sequence is that of Probable sugar-binding periplasmic protein from Brucella suis biovar 1 (strain 1330).